Here is a 378-residue protein sequence, read N- to C-terminus: Cln5-like protein 1 (378 aa).

Residues 1 to 20 (MNKIIIFILFLISILQSVRG) form the signal peptide. 8 N-linked (GlcNAc...) asparagine glycosylation sites follow: asparagine 63, asparagine 93, asparagine 135, asparagine 181, asparagine 220, asparagine 226, asparagine 254, and asparagine 280. The helical transmembrane segment at 308–328 (WIFIIILLSFTTVYLVGGILI) threads the bilayer.

The protein belongs to the CLN5 family.

Its subcellular location is the membrane. The protein is Cln5-like protein 1 (cln5la) of Dictyostelium discoideum (Social amoeba).